Here is a 513-residue protein sequence, read N- to C-terminus: ATP synthase subunit alpha (513 aa).

Position 169 to 176 (169 to 176 (GDRQTGKT)) interacts with ATP.

The protein belongs to the ATPase alpha/beta chains family. F-type ATPases have 2 components, CF(1) - the catalytic core - and CF(0) - the membrane proton channel. CF(1) has five subunits: alpha(3), beta(3), gamma(1), delta(1), epsilon(1). CF(0) has three main subunits: a(1), b(2) and c(9-12). The alpha and beta chains form an alternating ring which encloses part of the gamma chain. CF(1) is attached to CF(0) by a central stalk formed by the gamma and epsilon chains, while a peripheral stalk is formed by the delta and b chains.

It localises to the cell inner membrane. The enzyme catalyses ATP + H2O + 4 H(+)(in) = ADP + phosphate + 5 H(+)(out). Produces ATP from ADP in the presence of a proton gradient across the membrane. The alpha chain is a regulatory subunit. The polypeptide is ATP synthase subunit alpha (Shewanella loihica (strain ATCC BAA-1088 / PV-4)).